The primary structure comprises 878 residues: uncharacterized protein (878 aa).

Disordered regions lie at residues 58–223 (IGVD…RTKF), 306–494 (KGRL…TSSR), 585–652 (KLLE…SGKL), and 679–709 (PSSM…GGGG). 3 stretches are compositionally biased toward low complexity: residues 64 to 213 (NGNS…SGTS), 314 to 325 (SNSSQSSDSDYS), and 335 to 355 (IPNS…PNSN). Polar residues predominate over residues 362-372 (RNPNQLSSTNV). A compositionally biased stretch (low complexity) spans 373-494 (NNNINNSGGS…TPTTPVTSSR (122 aa)). The segment covering 585 to 595 (KLLEQQKEQQQ) has biased composition (basic and acidic residues). The span at 596-605 (KEQQQQQKQQ) shows a compositional bias: low complexity. A compositionally biased stretch (acidic residues) spans 615 to 624 (TDDEDEDDDE). Composition is skewed to low complexity over residues 639–652 (NLSN…SGKL) and 679–704 (PSSM…SSSS).

This is an uncharacterized protein from Dictyostelium discoideum (Social amoeba).